Consider the following 393-residue polypeptide: Putative cytochrome P450 143 (393 aa).

C342 contributes to the heme binding site.

Belongs to the cytochrome P450 family. Requires heme as cofactor.

The sequence is that of Putative cytochrome P450 143 (cyp143) from Mycobacterium bovis (strain ATCC BAA-935 / AF2122/97).